Here is a 210-residue protein sequence, read N- to C-terminus: Hydrogenase expression/formation protein HupD (210 aa).

Positions 22, 68, and 99 each coordinate Ni(2+).

Belongs to the peptidase A31 family.

Not known. Could be involved in the processing of hydrogenase. The chain is Hydrogenase expression/formation protein HupD (hupD) from Rhodobacter capsulatus (Rhodopseudomonas capsulata).